The primary structure comprises 118 residues: uncharacterized protein (118 aa).

The signal sequence occupies residues 1–18 (MSKLIFLFVVATLATIKA). Residue N24 is glycosylated (N-linked (GlcNAc...) asparagine; by host).

This is an uncharacterized protein from Magallana gigas (Pacific oyster).